We begin with the raw amino-acid sequence, 197 residues long: Peptide deformylase (197 aa).

Cys106 and His148 together coordinate Fe cation. Glu149 is an active-site residue. His152 contributes to the Fe cation binding site.

The protein belongs to the polypeptide deformylase family. Fe(2+) serves as cofactor.

The enzyme catalyses N-terminal N-formyl-L-methionyl-[peptide] + H2O = N-terminal L-methionyl-[peptide] + formate. Functionally, removes the formyl group from the N-terminal Met of newly synthesized proteins. Requires at least a dipeptide for an efficient rate of reaction. N-terminal L-methionine is a prerequisite for activity but the enzyme has broad specificity at other positions. This chain is Peptide deformylase, found in Mycobacterium tuberculosis (strain ATCC 25177 / H37Ra).